The sequence spans 499 residues: CD-NTase-associated protein 4 (499 aa).

The segment at 1–226 (MATSVLANWH…DFRFDGAARA (226 aa)) is N-terminal endonuclease domain. Active-site residues include D49 and Q72. Residue D49 coordinates Mg(2+). Mg(2+) is bound at residue I73. The active site involves K74. Positions 258-464 (FRNVALRSFS…HIFSAAPNAV (207 aa)) are C-terminal SAVED domain.

It belongs to the Cap4 nuclease family. In terms of assembly, a monomer in the absence of ligand, in its presence it forms oligomers. It depends on Mg(2+) as a cofactor.

DNase activity is activated upon ligand binding (cAAG). Inhibited by EDTA. Functionally, effector DNase of a CBASS antivirus system. CBASS (cyclic oligonucleotide-based antiphage signaling system) provides immunity against bacteriophages. The CD-NTase protein (CdnD) synthesizes cyclic nucleotides in response to infection; these serve as specific second messenger signals. The signals activate a diverse range of effectors, leading to bacterial cell death and thus abortive phage infection. A type II-C(AAG) CBASS system. Its function is as follows. Binds second messenger 3',3',3'-cyclic AMP-AMP-GMP (cAAG). In the presence of cAAG (synthesized by the cognate CD-NTase protein in the CBASS operon), endonucleolytically degrades dsDNA to approximately 17 bp length fragments, with a preference for 5'-C|NG sites. Only binds DNA in the presence of cAAG. Not activated by c-di-AMP, c-di-GMP, 3',3'-cyclic GMP-AMP (cGAMP) or the second messenger of A.baumanii strain ATCC 27244. In terms of biological role, protects E.coli against phage T2 infection. When the cdnD-cap2-cap3-cap4 operon is introduced in E.coli there is a more than 10(3) decrease in the efficiency of T2 plaque formation. The operon does not protect against phage T5 and only about 10-fold against T7. Expression of cdnD-cap4 alone protects E.coli against phage T2 infection. The polypeptide is CD-NTase-associated protein 4 (Enterobacter hormaechei subsp. hoffmannii (strain UCI 50)).